The following is a 383-amino-acid chain: Protein COS7 (383 aa).

Residues 1-42 (MKENEVKDEKSVDVLSFKQLESQKIVLPQDLFRSSFTWFCYE) are Cytoplasmic-facing. A helical membrane pass occupies residues 43–63 (IYKSLAFRIWMLLWLPLSVWW). The Extracellular segment spans residues 64–72 (KLSNNCIYP). A helical membrane pass occupies residues 73–93 (LIVSLLVLFLGPIFVLVICGL). Residues 94 to 232 (SRKRSLSKQL…RSKLTWFLKR (139 aa)) are Cytoplasmic-facing. A helical membrane pass occupies residues 233 to 253 (IFTIYSLPLWLAFLNCICVSQ). Position 254 (His254) is a topological domain, extracellular. The chain crosses the membrane as a helical span at residues 255–275 (FCLAFRILCPGLFFLMMVWLF). Topologically, residues 276–383 (QNMRTTALLV…SRNEESLMKK (108 aa)) are cytoplasmic.

It belongs to the DUP/COS family.

Its subcellular location is the membrane. This chain is Protein COS7 (COS7), found in Saccharomyces cerevisiae (strain ATCC 204508 / S288c) (Baker's yeast).